The sequence spans 110 residues: Secreted RxLR effector protein 89 (110 aa).

An N-terminal signal peptide occupies residues M1 to S22. N29 carries an N-linked (GlcNAc...) asparagine glycan. A RxLR-dEER motif is present at residues R61–R74.

The protein belongs to the RxLR effector family.

It localises to the secreted. It is found in the host nucleus. The protein resides in the host cytoplasm. In terms of biological role, secreted effector that completely suppresses the host cell death induced by cell death-inducing proteins. This Plasmopara viticola (Downy mildew of grapevine) protein is Secreted RxLR effector protein 89.